A 21-amino-acid polypeptide reads, in one-letter code: Trypsin (21 aa).

Positions 1–7 (FPIEEDK) are cleaved as a propeptide — activation peptide. The Peptidase S1 domain maps to 8-21 (IVGGYECPKHXVPW).

This sequence belongs to the peptidase S1 family.

The protein localises to the secreted. The protein resides in the extracellular space. It catalyses the reaction Preferential cleavage: Arg-|-Xaa, Lys-|-Xaa.. The sequence is that of Trypsin from Protopterus aethiopicus (Marbled lungfish).